Consider the following 968-residue polypeptide: MKSQNSKEQKSDFSYKETLNLLKTDFSMRANSVLREPEIQNFWANNDIDFQLGSSNSGEIFTLHDGPPYANGALHMGHALNKVLKDIINKYKTLKGFRVHFVPGWDCHGLPIELKVLQNLKSDERKNLDTLNLRKKATDYAHIQINNQKEGFKRWGIWGDWNNPYLTLKKSYESAQIGVFGKMFLNGYIYRGLKPVHWSPSSRTALAEAELEYPDDHYSKSIYVSLKITKIPEEIQLNFIQKNINIKKDFFQNNSFITIWTTTPWTIPANEAVAVNPKINYIFAIDEEKRIYLFAKDLCSEISKKFNKDFKVLLEVKGSKLENIEYQHPSKNKNCRIVIGGDYITTESGTGIVHTAPGHGIDDFNVGQKYDLPITCVVDEKGNLNEYSGQFKGSNVLKDANDLIIEYLKVNNLLLLQENYKHRYPYDWRTKKPTIFRATEQWFASVNGFRSSALKAIEDVEWMPETGKKRIYSMVVGRGDWCISRQRSWGVPIPVFYKKNGNEILLNKEIINHIQELFSEHGADIWWDWDVKNLLPENYAKESDLWKKGKDTMDVWFDSGSSWAAVCELRSELKYPADLYLEGSDQHRGWFQSSLLTSVAVNNKPPYKKVLTHGFALDENGRKMSKSLGNVVDPNIIINGGNNKKTDPAYGADVLRLWVSSVDYSVDVPIGSNILKQLSDVYRKVRNTARYLLGNIHDYDPKIDSFEIDQLPLLDQWMLGRLVEVTDQISNAYENYEFSKFFQILQSFCVVDLSNFYLDIAKDRLYVSSKSQFRRRSCQFVMSKVVENLAVLISPVLCHMAEDIWQNIPYSTKEKSVFQRGWPIFSQSWKNKILNEHISNLRNLRVEINKAIEGCRNKQIIGAALETEVNYLPEDKALKDSLTWLKEFGNQDVDLFRDWLIVSNFQVVSDLVDNSLATDNNALGKIQINKAQGQKCDRCWHYQKETFNGIQNTKLCKRCSNIINFEFI.

Residues 68–78 (PYANGALHMGH) carry the 'HIGH' region motif. Glu582 serves as a coordination point for L-isoleucyl-5'-AMP. Residues 623–627 (KMSKS) carry the 'KMSKS' region motif. Residue Lys626 coordinates ATP. Residues Cys936, Cys939, Cys956, and Cys959 each coordinate Zn(2+).

The protein belongs to the class-I aminoacyl-tRNA synthetase family. IleS type 1 subfamily. Monomer. The cofactor is Zn(2+).

The protein localises to the cytoplasm. It catalyses the reaction tRNA(Ile) + L-isoleucine + ATP = L-isoleucyl-tRNA(Ile) + AMP + diphosphate. In terms of biological role, catalyzes the attachment of isoleucine to tRNA(Ile). As IleRS can inadvertently accommodate and process structurally similar amino acids such as valine, to avoid such errors it has two additional distinct tRNA(Ile)-dependent editing activities. One activity is designated as 'pretransfer' editing and involves the hydrolysis of activated Val-AMP. The other activity is designated 'posttransfer' editing and involves deacylation of mischarged Val-tRNA(Ile). The chain is Isoleucine--tRNA ligase from Prochlorococcus marinus (strain MIT 9301).